The following is a 214-amino-acid chain: Orotate phosphoribosyltransferase (214 aa).

5-phospho-alpha-D-ribose 1-diphosphate contacts are provided by residues Arg-125, Lys-126, Lys-129, His-131, and 151–159 (EDTSTTGNS). Thr-155 and Arg-183 together coordinate orotate.

This sequence belongs to the purine/pyrimidine phosphoribosyltransferase family. PyrE subfamily. In terms of assembly, homodimer. It depends on Mg(2+) as a cofactor.

It catalyses the reaction orotidine 5'-phosphate + diphosphate = orotate + 5-phospho-alpha-D-ribose 1-diphosphate. Its pathway is pyrimidine metabolism; UMP biosynthesis via de novo pathway; UMP from orotate: step 1/2. Its function is as follows. Catalyzes the transfer of a ribosyl phosphate group from 5-phosphoribose 1-diphosphate to orotate, leading to the formation of orotidine monophosphate (OMP). The chain is Orotate phosphoribosyltransferase from Tropheryma whipplei (strain Twist) (Whipple's bacillus).